Consider the following 248-residue polypeptide: Membrane-spanning 4-domains subfamily A member 6A (248 aa).

At 1 to 46 (MTSQPVPNETIIVLPSNVINFSQAEKPEPTNQGQDSLKKHLHAEIK) the chain is on the cytoplasmic side. A helical membrane pass occupies residues 47-67 (VIGTIQILCGMMVLSLGIILA). Residues 68–84 (SASFSPNFTQVTSTLLN) lie on the Extracellular side of the membrane. The helical transmembrane segment at 85–105 (SAYPFIGPFFFIISGSLSIAT) threads the bilayer. Over 106–116 (EKRLTKLLVHS) the chain is Cytoplasmic. A helical membrane pass occupies residues 117–137 (SLVGSILSALSALVGFIILSV). Residues 138–185 (KQATLNPASLQCELDKNNIPTRSYVSYFYHDSLYTTDCYTAKASLAGT) lie on the Extracellular side of the membrane. Residues 186 to 206 (LSLMLICTLLEFCLAVLTAVL) traverse the membrane as a helical segment. Over 207–248 (RWKQAYSDFPGSVLFLPHSYIGNSGMSSKMTHDCGYEELLTS) the chain is Cytoplasmic.

It belongs to the MS4A family. Variable expression in some B-cell, myelomonocytic, and erythroleukemia cell lines.

It is found in the membrane. Functionally, may be involved in signal transduction as a component of a multimeric receptor complex. This is Membrane-spanning 4-domains subfamily A member 6A (MS4A6A) from Homo sapiens (Human).